Here is a 161-residue protein sequence, read N- to C-terminus: Nucleotide-binding protein amb3630 (161 aa).

It belongs to the YajQ family.

Its function is as follows. Nucleotide-binding protein. This chain is Nucleotide-binding protein amb3630, found in Paramagnetospirillum magneticum (strain ATCC 700264 / AMB-1) (Magnetospirillum magneticum).